Consider the following 502-residue polypeptide: Lysine--tRNA ligase (502 aa).

Mg(2+)-binding residues include E409 and E416.

The protein belongs to the class-II aminoacyl-tRNA synthetase family. As to quaternary structure, homodimer. Requires Mg(2+) as cofactor.

The protein resides in the cytoplasm. It catalyses the reaction tRNA(Lys) + L-lysine + ATP = L-lysyl-tRNA(Lys) + AMP + diphosphate. This is Lysine--tRNA ligase from Shouchella clausii (strain KSM-K16) (Alkalihalobacillus clausii).